Here is a 276-residue protein sequence, read N- to C-terminus: Putative E3 ubiquitin-protein ligase SINA-like 9 (276 aa).

The RING-type zinc-finger motif lies at 38–74 (CPICCEALTSPIFQCDNGHLACGSCCPKLSNKCPACT). The SBD stretch occupies residues 88 to 274 (VLESILIPCP…MQVFIIENVD (187 aa)). The SIAH-type zinc-finger motif lies at 91-149 (SILIPCPNVRFGCTKSFFYGKESAHEKECIFSQCSCPSSVCDYTGSYKDLYAHYKLTHS). The Zn(2+) site is built by Cys96, Cys103, His115, Cys119, Cys126, Cys131, His143, and His148.

It belongs to the SINA (Seven in absentia) family.

The enzyme catalyses S-ubiquitinyl-[E2 ubiquitin-conjugating enzyme]-L-cysteine + [acceptor protein]-L-lysine = [E2 ubiquitin-conjugating enzyme]-L-cysteine + N(6)-ubiquitinyl-[acceptor protein]-L-lysine.. The protein operates within protein modification; protein ubiquitination. E3 ubiquitin-protein ligase that mediates ubiquitination and subsequent proteasomal degradation of target proteins. E3 ubiquitin ligases accept ubiquitin from an E2 ubiquitin-conjugating enzyme in the form of a thioester and then directly transfers the ubiquitin to targeted substrates. It probably triggers the ubiquitin-mediated degradation of different substrates. This Arabidopsis thaliana (Mouse-ear cress) protein is Putative E3 ubiquitin-protein ligase SINA-like 9.